The following is a 619-amino-acid chain: Elongation factor 4 (619 aa).

Residues 17 to 198 (SVIRNFCIIA…RVVRAIPGPE (182 aa)) enclose the tr-type G domain. Residues 29-34 (DHGKST) and 145-148 (NKID) contribute to the GTP site.

This sequence belongs to the TRAFAC class translation factor GTPase superfamily. Classic translation factor GTPase family. LepA subfamily.

Its subcellular location is the cell membrane. The enzyme catalyses GTP + H2O = GDP + phosphate + H(+). Functionally, required for accurate and efficient protein synthesis under certain stress conditions. May act as a fidelity factor of the translation reaction, by catalyzing a one-codon backward translocation of tRNAs on improperly translocated ribosomes. Back-translocation proceeds from a post-translocation (POST) complex to a pre-translocation (PRE) complex, thus giving elongation factor G a second chance to translocate the tRNAs correctly. Binds to ribosomes in a GTP-dependent manner. The chain is Elongation factor 4 from Micrococcus luteus (strain ATCC 4698 / DSM 20030 / JCM 1464 / CCM 169 / CCUG 5858 / IAM 1056 / NBRC 3333 / NCIMB 9278 / NCTC 2665 / VKM Ac-2230) (Micrococcus lysodeikticus).